We begin with the raw amino-acid sequence, 693 residues long: DNA ligase (693 aa).

NAD(+) contacts are provided by residues 40–44 (DSEYD), 89–90 (SL), and E121. K123 functions as the N6-AMP-lysine intermediate in the catalytic mechanism. The NAD(+) site is built by R144, E179, K295, and K319. Zn(2+) is bound by residues C413, C416, C431, and C437. The region spanning 610 to 693 (REQNILTGKI…AFIKCLEKEV (84 aa)) is the BRCT domain.

It belongs to the NAD-dependent DNA ligase family. LigA subfamily. It depends on Mg(2+) as a cofactor. Mn(2+) serves as cofactor.

The catalysed reaction is NAD(+) + (deoxyribonucleotide)n-3'-hydroxyl + 5'-phospho-(deoxyribonucleotide)m = (deoxyribonucleotide)n+m + AMP + beta-nicotinamide D-nucleotide.. Functionally, DNA ligase that catalyzes the formation of phosphodiester linkages between 5'-phosphoryl and 3'-hydroxyl groups in double-stranded DNA using NAD as a coenzyme and as the energy source for the reaction. It is essential for DNA replication and repair of damaged DNA. The protein is DNA ligase of Rickettsia typhi (strain ATCC VR-144 / Wilmington).